A 1535-amino-acid polypeptide reads, in one-letter code: Lysine-specific demethylase 5D (1535 aa).

Residues 14-55 form the JmjN domain; it reads CPVFEPSWAEFQDPLGYIAKIRPIAEKSGICKIRPPADWQPP. The region spanning 79 to 169 is the ARID domain; sequence TRVKLNYLDQ…IIYPYEMFQS (91 aa). Positions 192 to 227 are disordered; it reads PHSIPLRQSVQPSKFSSYSRRAKRLQPDPEPTEEDI. The segment covering 197–210 has biased composition (polar residues); it reads LRQSVQPSKFSSYS. Residues lysine 205, lysine 229, lysine 244, and lysine 272 each participate in a glycyl lysine isopeptide (Lys-Gly) (interchain with G-Cter in SUMO2) cross-link. Residues serine 291 and serine 307 each carry the phosphoserine modification. The PHD-type 1 zinc-finger motif lies at 314–364; sequence SYICQVCSRGDEDDKLLFCDGCDDNYHIFCLLPPLPEIPRGIWRCPKCILA. Residue tyrosine 430 participates in 2-oxoglutarate binding. Positions 458–624 constitute a JmjC domain; the sequence is EYATSGWNLN…AGRQCIEHYR (167 aa). Residues histidine 504 and glutamate 506 each contribute to the Fe cation site. Residues serine 512, asparagine 514, and lysine 522 each contribute to the 2-oxoglutarate site. Histidine 592 is a binding site for Fe cation. The C5HC2 zinc finger occupies 697-749; the sequence is CIKCKTTCFLSALACYDCPDGLVCLSHINDLCKCSSSRQYLRYRYTLDELPTM. Position 884 is a phosphoserine (serine 884). Residues 1174-1235 form a PHD-type 2 zinc finger; it reads ICVCGQVPAG…DTKFLCPLCM (62 aa). At serine 1342 the chain carries Phosphoserine. Residues 1425 to 1519 are disordered; it reads HQGSRTRSRA…KDSGSSAACP (95 aa). The segment covering 1428–1441 has biased composition (basic residues); it reads SRTRSRALERRRRQ. Positions 1473-1487 are enriched in basic and acidic residues; that stretch reads GREEEHYQEKADREN. Positions 1490–1517 are enriched in polar residues; the sequence is LTPSTDHSPSLKGNQNSLQHKDSGSSAA.

It belongs to the JARID1 histone demethylase family. As to quaternary structure, interacts withPCGF6, MSH5, ZMYND8, AR. L-ascorbate serves as cofactor. It depends on Fe(2+) as a cofactor.

It is found in the nucleus. It carries out the reaction N(6),N(6),N(6)-trimethyl-L-lysyl(4)-[histone H3] + 3 2-oxoglutarate + 3 O2 = L-lysyl(4)-[histone H3] + 3 formaldehyde + 3 succinate + 3 CO2. Its function is as follows. Histone demethylase that specifically demethylates 'Lys-4' of histone H3, thereby playing a central role in histone code. Does not demethylate histone H3 'Lys-9', H3 'Lys-27', H3 'Lys-36', H3 'Lys-79' or H4 'Lys-20'. Demethylates trimethylated and dimethylated but not monomethylated H3 'Lys-4'. May play a role in spermatogenesis. Involved in transcriptional repression of diverse metastasis-associated genes; in this function seems to cooperate with ZMYND8. Suppresses prostate cancer cell invasion. Regulates androgen receptor (AR) transcriptional activity by demethylating H3K4me3 active transcription marks. This chain is Lysine-specific demethylase 5D (KDM5D), found in Pan troglodytes (Chimpanzee).